A 262-amino-acid chain; its full sequence is Type III pantothenate kinase (262 aa).

Position 7 to 14 (7 to 14 (DIGNTRLK)) interacts with ATP. Substrate contacts are provided by residues Tyr96 and 103-106 (GSDR). The Proton acceptor role is filled by Asp105. Residue Thr137 coordinates ATP. Position 187 (Thr187) interacts with substrate.

Belongs to the type III pantothenate kinase family. Homodimer. It depends on NH4(+) as a cofactor. K(+) serves as cofactor.

It localises to the cytoplasm. The enzyme catalyses (R)-pantothenate + ATP = (R)-4'-phosphopantothenate + ADP + H(+). It functions in the pathway cofactor biosynthesis; coenzyme A biosynthesis; CoA from (R)-pantothenate: step 1/5. Catalyzes the phosphorylation of pantothenate (Pan), the first step in CoA biosynthesis. The polypeptide is Type III pantothenate kinase (Leptothrix cholodnii (strain ATCC 51168 / LMG 8142 / SP-6) (Leptothrix discophora (strain SP-6))).